A 363-amino-acid polypeptide reads, in one-letter code: Type-2 angiotensin II receptor (363 aa).

Residues 1–45 (MKDNFSFAATSRNITSSLPFDNLNATGTNESAFNCSHKPADKHLE) are Extracellular-facing. N-linked (GlcNAc...) asparagine glycans are attached at residues Asn4, Asn13, Asn24, Asn29, and Asn34. 2 cysteine pairs are disulfide-bonded: Cys35–Cys290 and Cys117–Cys195. The chain crosses the membrane as a helical span at residues 46-70 (AIPVLYYMIFVIGFAVNIVVVSLFC). Residues 71–80 (CQKGPKKVSS) lie on the Cytoplasmic side of the membrane. A helical transmembrane segment spans residues 81–104 (IYIFNLAVADLLLLATLPLWATYY). Angiotensin II contacts are provided by Tyr103 and Tyr104. Residues 105–114 (SYRYDWLFGP) lie on the Extracellular side of the membrane. Residues 115 to 140 (VMCKVFGSFLTLNMFASIFFITCMSV) form a helical membrane-spanning segment. The Cytoplasmic segment spans residues 141–159 (DRYQSVIYPFLSQRRNPWQ). The chain crosses the membrane as a helical span at residues 160–181 (ASYVVPLVWCMACLSSLPTFYF). Angiotensin II contacts are provided by Arg182, Tyr204, and Lys215. The Extracellular segment spans residues 182-206 (RDVRTIEYLGVNACIMAFPPEKYAQ). A helical membrane pass occupies residues 207-232 (WSAGIALMKNILGFIIPLIFIATCYF). The Cytoplasmic portion of the chain corresponds to 233–257 (GIRKHLLKTNSYGKNRITRDQVLKM). The chain crosses the membrane as a helical span at residues 258-281 (AAAVVLAFIICWLPFHVLTFLDAL). Asp279 provides a ligand contact to angiotensin II. Residues 282-294 (TWMGIINSCEVIA) lie on the Extracellular side of the membrane. Residues 295–320 (VIDLALPFAILLGFTNSCVNPFLYCF) traverse the membrane as a helical segment. Asp297 serves as a coordination point for angiotensin II. Over 321–363 (VGNRFQQKLRSVFRVPITWLQGKRETMSCRKSSSLREMDTFVS) the chain is Cytoplasmic. The segment at 324 to 333 (RFQQKLRSVF) is helix VIII. Ser354 carries the phosphoserine; by PKC modification.

It belongs to the G-protein coupled receptor 1 family. In terms of assembly, interacts with MTUS1. In terms of tissue distribution, abundant expression in fetal tissues, immature brain, skin wound and atretic ovarian follicles.

Its subcellular location is the cell membrane. Receptor for angiotensin II, a vasoconstricting peptide. Signals primarily via a non-canonical G-protein- and beta-arrestin independent pathways. Cooperates with MTUS1 to inhibit ERK2 activation and cell proliferation. This Rattus norvegicus (Rat) protein is Type-2 angiotensin II receptor.